A 136-amino-acid polypeptide reads, in one-letter code: Large ribosomal subunit protein bL17 (136 aa).

Belongs to the bacterial ribosomal protein bL17 family. As to quaternary structure, part of the 50S ribosomal subunit. Contacts protein L32.

The sequence is that of Large ribosomal subunit protein bL17 from Akkermansia muciniphila (strain ATCC BAA-835 / DSM 22959 / JCM 33894 / BCRC 81048 / CCUG 64013 / CIP 107961 / Muc).